The following is a 187-amino-acid chain: Pyridoxal 5'-phosphate synthase subunit PdxT (187 aa).

47–49 (GES) contacts L-glutamine. The active-site Nucleophile is the cysteine 76. Residues arginine 102 and 128–129 (IR) contribute to the L-glutamine site. Active-site charge relay system residues include histidine 165 and glutamate 167.

The protein belongs to the glutaminase PdxT/SNO family. In the presence of PdxS, forms a dodecamer of heterodimers. Only shows activity in the heterodimer.

The catalysed reaction is aldehydo-D-ribose 5-phosphate + D-glyceraldehyde 3-phosphate + L-glutamine = pyridoxal 5'-phosphate + L-glutamate + phosphate + 3 H2O + H(+). It carries out the reaction L-glutamine + H2O = L-glutamate + NH4(+). It participates in cofactor biosynthesis; pyridoxal 5'-phosphate biosynthesis. Functionally, catalyzes the hydrolysis of glutamine to glutamate and ammonia as part of the biosynthesis of pyridoxal 5'-phosphate. The resulting ammonia molecule is channeled to the active site of PdxS. The chain is Pyridoxal 5'-phosphate synthase subunit PdxT from Methanococcus maripaludis (strain C7 / ATCC BAA-1331).